The following is a 453-amino-acid chain: Formimidoylglutamate deiminase (453 aa).

Positions 56 and 58 each coordinate Zn(2+). Gln61, Arg82, Tyr121, His206, and Arg209 together coordinate N-formimidoyl-L-glutamate. His232 contributes to the Zn(2+) binding site. Glu235 serves as a coordination point for N-formimidoyl-L-glutamate. Catalysis depends on proton acceptor residues His269 and Asp320. Asp320 contributes to the Zn(2+) binding site.

Belongs to the metallo-dependent hydrolases superfamily. In terms of assembly, homodimer. Zn(2+) serves as cofactor.

It catalyses the reaction N-formimidoyl-L-glutamate + H2O = N-formyl-L-glutamate + NH4(+). Its pathway is amino-acid degradation; L-histidine degradation into L-glutamate; L-glutamate from N-formimidoyl-L-glutamate (deiminase route): step 1/2. Inhibited by the metal chelator dipicolinate. Inhibited by N-formimino-L-aspartate and N-guanidino-L-glutaric acid. In terms of biological role, catalyzes the hydrolysis of N-formimino-L-glutamate to N-formyl-L-glutamate and ammonia. The sequence is that of Formimidoylglutamate deiminase from Pseudomonas aeruginosa (strain ATCC 15692 / DSM 22644 / CIP 104116 / JCM 14847 / LMG 12228 / 1C / PRS 101 / PAO1).